The sequence spans 442 residues: GTPase Obg (442 aa).

The region spanning 1–158 is the Obg domain; it reads MFYDQARIFV…HWLELELKLL (158 aa). In terms of domain architecture, OBG-type G spans 159-329; it reads ADVGLVGFPN…LIYHVHKGLE (171 aa). GTP contacts are provided by residues 165–172, 190–194, 212–215, 282–285, and 310–312; these read GFPNVGKS, FTTLE, DIPG, NKMD, and SAA. Mg(2+) contacts are provided by serine 172 and threonine 192. Residues 349-427 enclose the OCT domain; that stretch reads FTGKTEERFK…IGDLDFDFIE (79 aa).

This sequence belongs to the TRAFAC class OBG-HflX-like GTPase superfamily. OBG GTPase family. Monomer. It depends on Mg(2+) as a cofactor.

The protein resides in the cytoplasm. An essential GTPase which binds GTP, GDP and possibly (p)ppGpp with moderate affinity, with high nucleotide exchange rates and a fairly low GTP hydrolysis rate. Plays a role in control of the cell cycle, stress response, ribosome biogenesis and in those bacteria that undergo differentiation, in morphogenesis control. The polypeptide is GTPase Obg (Heliobacterium modesticaldum (strain ATCC 51547 / Ice1)).